The sequence spans 130 residues: Small ribosomal subunit protein uS8 (130 aa).

Belongs to the universal ribosomal protein uS8 family. In terms of assembly, part of the 30S ribosomal subunit. Contacts proteins S5 and S12.

In terms of biological role, one of the primary rRNA binding proteins, it binds directly to 16S rRNA central domain where it helps coordinate assembly of the platform of the 30S subunit. This Photorhabdus laumondii subsp. laumondii (strain DSM 15139 / CIP 105565 / TT01) (Photorhabdus luminescens subsp. laumondii) protein is Small ribosomal subunit protein uS8.